The sequence spans 107 residues: Nucleoid-associated protein Msil_0275 (107 aa).

The protein belongs to the YbaB/EbfC family. Homodimer.

The protein localises to the cytoplasm. Its subcellular location is the nucleoid. In terms of biological role, binds to DNA and alters its conformation. May be involved in regulation of gene expression, nucleoid organization and DNA protection. The sequence is that of Nucleoid-associated protein Msil_0275 from Methylocella silvestris (strain DSM 15510 / CIP 108128 / LMG 27833 / NCIMB 13906 / BL2).